The primary structure comprises 156 residues: 6,7-dimethyl-8-ribityllumazine synthase (156 aa).

5-amino-6-(D-ribitylamino)uracil contacts are provided by residues F23, 57–59 (AFE), and 81–83 (TVI). 86–87 (ST) is a (2S)-2-hydroxy-3-oxobutyl phosphate binding site. H89 acts as the Proton donor in catalysis. F114 is a 5-amino-6-(D-ribitylamino)uracil binding site. R128 provides a ligand contact to (2S)-2-hydroxy-3-oxobutyl phosphate.

It belongs to the DMRL synthase family. In terms of assembly, forms an icosahedral capsid composed of 60 subunits, arranged as a dodecamer of pentamers.

It catalyses the reaction (2S)-2-hydroxy-3-oxobutyl phosphate + 5-amino-6-(D-ribitylamino)uracil = 6,7-dimethyl-8-(1-D-ribityl)lumazine + phosphate + 2 H2O + H(+). Its pathway is cofactor biosynthesis; riboflavin biosynthesis; riboflavin from 2-hydroxy-3-oxobutyl phosphate and 5-amino-6-(D-ribitylamino)uracil: step 1/2. Its function is as follows. Catalyzes the formation of 6,7-dimethyl-8-ribityllumazine by condensation of 5-amino-6-(D-ribitylamino)uracil with 3,4-dihydroxy-2-butanone 4-phosphate. This is the penultimate step in the biosynthesis of riboflavin. This Halalkalibacterium halodurans (strain ATCC BAA-125 / DSM 18197 / FERM 7344 / JCM 9153 / C-125) (Bacillus halodurans) protein is 6,7-dimethyl-8-ribityllumazine synthase.